Here is a 185-residue protein sequence, read N- to C-terminus: Ribosome-recycling factor (185 aa).

This sequence belongs to the RRF family.

The protein localises to the cytoplasm. Its function is as follows. Responsible for the release of ribosomes from messenger RNA at the termination of protein biosynthesis. May increase the efficiency of translation by recycling ribosomes from one round of translation to another. This Thermomicrobium roseum (strain ATCC 27502 / DSM 5159 / P-2) protein is Ribosome-recycling factor.